The sequence spans 119 residues: Beta-2-microglobulin (119 aa).

A signal peptide spans 1-20 (MASSVVVALLVLLSLSGLEA). Positions 25 to 114 (PKIQVYSRHP…VTFSTPKTVK (90 aa)) constitute an Ig-like C1-type domain. A disulfide bridge links Cys-45 with Cys-100.

This sequence belongs to the beta-2-microglobulin family. As to quaternary structure, heterodimer of an alpha chain and a beta chain. Beta-2-microglobulin is the beta-chain of major histocompatibility complex class I molecules.

Its subcellular location is the secreted. In terms of biological role, component of the class I major histocompatibility complex (MHC). Involved in the presentation of peptide antigens to the immune system. This is Beta-2-microglobulin (B2M) from Callithrix aurita (White-eared marmoset).